Consider the following 294-residue polypeptide: Taste receptor type 2 member 143 (294 aa).

At 1 to 7 the chain is on the extracellular side; sequence MPSTPTL. A helical membrane pass occupies residues 8–28; it reads IFIVIFFLVSVASMLQNGFMI. Residues 29-43 are Cytoplasmic-facing; that stretch reads IVLGREWMRNRALPA. Residues 44-64 traverse the membrane as a helical segment; it reads VDMIVASLASSRFCLHGIAIL. The Extracellular segment spans residues 65 to 80; that stretch reads NNFLASFDFCYQANFV. Residues 81-101 traverse the membrane as a helical segment; sequence GILWDFINTLILWLTAWLAIF. Residues 102–128 lie on the Cytoplasmic side of the membrane; sequence YCVKISSFSHPVLFWLKWRISQLVPRL. The helical transmembrane segment at 129–149 threads the bilayer; sequence LLVSLIMGGLSAIISATGNII. Over 150–180 the chain is Extracellular; the sequence is ANQMIISQGFHGNCTFGHMSLDFYRYYYLSH. The N-linked (GlcNAc...) asparagine glycan is linked to Asn-162. A helical transmembrane segment spans residues 181-201; the sequence is AVLMWFTPFFLFLVSIIFLMF. The Cytoplasmic segment spans residues 202-227; the sequence is SLYRHVEKMRGHRPGPWDPRTQAHTM. Residues 228–248 traverse the membrane as a helical segment; the sequence is ALKSLTVFITFYILFFLALII. At 249–260 the chain is on the extracellular side; the sequence is SSTKSKTMHSYW. The chain crosses the membrane as a helical span at residues 261 to 281; sequence YWVREIIIYTGIFLNSIILVL. Over 282–294 the chain is Cytoplasmic; it reads SNPKLRKALKMRF.

The protein belongs to the G-protein coupled receptor T2R family.

The protein resides in the membrane. In terms of biological role, putative taste receptor which may play a role in the perception of bitterness. The protein is Taste receptor type 2 member 143 of Rattus norvegicus (Rat).